The sequence spans 591 residues: Aspartate--tRNA(Asp/Asn) ligase (591 aa).

E176 provides a ligand contact to L-aspartate. The segment at Q200 to K203 is aspartate. R222 contacts L-aspartate. Residues R222–E224 and Q231 contribute to the ATP site. H450 is a binding site for L-aspartate. E484 serves as a coordination point for ATP. Position 491 (R491) interacts with L-aspartate. G536 to R539 serves as a coordination point for ATP.

It belongs to the class-II aminoacyl-tRNA synthetase family. Type 1 subfamily. In terms of assembly, homodimer.

It is found in the cytoplasm. It catalyses the reaction tRNA(Asx) + L-aspartate + ATP = L-aspartyl-tRNA(Asx) + AMP + diphosphate. Functionally, aspartyl-tRNA synthetase with relaxed tRNA specificity since it is able to aspartylate not only its cognate tRNA(Asp) but also tRNA(Asn). Reaction proceeds in two steps: L-aspartate is first activated by ATP to form Asp-AMP and then transferred to the acceptor end of tRNA(Asp/Asn). The chain is Aspartate--tRNA(Asp/Asn) ligase from Bacillus cereus (strain G9842).